A 55-amino-acid polypeptide reads, in one-letter code: ATP synthase small subunit 6, mitochondrial (55 aa).

A mitochondrion-targeting transit peptide spans 1–15; the sequence is MRQFDPWPVFFRREW. A helical membrane pass occupies residues 20 to 39; sequence PFLVGFAVTGAIITKMSLGF.

This sequence belongs to the ATPase 6 subunit family.

The protein resides in the mitochondrion inner membrane. Its function is as follows. Mitochondrial membrane ATP synthase (F(1)F(0) ATP synthase or Complex V) produces ATP from ADP in the presence of a proton gradient across the membrane which is generated by electron transport complexes of the respiratory chain. F-type ATPases consist of two structural domains, F(1) - containing the extramembraneous catalytic core and F(0) - containing the membrane proton channel, linked together by a central stalk and a peripheral stalk. During catalysis, ATP synthesis in the catalytic domain of F(1) is coupled via a rotary mechanism of the central stalk subunits to proton translocation. Part of the complex F(0) domain. Confers tolerance to several abiotic stresses (e.g. salt, mannitol, drought, oxidative and cold stresses), probably by providing additional energy needed for cell homeostasis. The protein is ATP synthase small subunit 6, mitochondrial of Solanum tuberosum (Potato).